Here is a 508-residue protein sequence, read N- to C-terminus: Glycerol kinase (508 aa).

Threonine 14 serves as a coordination point for ADP. ATP is bound by residues threonine 14, threonine 15, and serine 16. Sn-glycerol 3-phosphate is bound at residue threonine 14. Arginine 18 contributes to the ADP binding site. Arginine 84, glutamate 85, and tyrosine 136 together coordinate sn-glycerol 3-phosphate. Positions 84, 85, and 136 each coordinate glycerol. Histidine 232 carries the phosphohistidine; by HPr modification. Aspartate 246 is a binding site for sn-glycerol 3-phosphate. Aspartate 246 and glutamine 247 together coordinate glycerol. ADP-binding residues include threonine 268 and glycine 311. Positions 268, 311, 315, and 412 each coordinate ATP. 2 residues coordinate ADP: glycine 412 and asparagine 416.

Belongs to the FGGY kinase family. As to quaternary structure, homotetramer and homodimer (in equilibrium). The phosphoenolpyruvate-dependent sugar phosphotransferase system (PTS), including enzyme I, and histidine-containing protein (HPr) are required for the phosphorylation, which leads to the activation of the enzyme.

The enzyme catalyses glycerol + ATP = sn-glycerol 3-phosphate + ADP + H(+). It functions in the pathway polyol metabolism; glycerol degradation via glycerol kinase pathway; sn-glycerol 3-phosphate from glycerol: step 1/1. With respect to regulation, activated by phosphorylation and inhibited by fructose 1,6-bisphosphate (FBP). In terms of biological role, key enzyme in the regulation of glycerol uptake and metabolism. Catalyzes the phosphorylation of glycerol to yield sn-glycerol 3-phosphate. This Streptococcus pyogenes serotype M28 (strain MGAS6180) protein is Glycerol kinase.